Reading from the N-terminus, the 138-residue chain is Transcription antitermination protein NusB (138 aa).

This sequence belongs to the NusB family.

Involved in transcription antitermination. Required for transcription of ribosomal RNA (rRNA) genes. Binds specifically to the boxA antiterminator sequence of the ribosomal RNA (rrn) operons. In Yersinia pseudotuberculosis serotype O:1b (strain IP 31758), this protein is Transcription antitermination protein NusB.